Here is a 340-residue protein sequence, read N- to C-terminus: Ferrochelatase (340 aa).

Fe cation is bound by residues H189 and E292.

The protein belongs to the ferrochelatase family.

It localises to the cytoplasm. It catalyses the reaction heme b + 2 H(+) = protoporphyrin IX + Fe(2+). The protein operates within porphyrin-containing compound metabolism; protoheme biosynthesis; protoheme from protoporphyrin-IX: step 1/1. Its function is as follows. Catalyzes the ferrous insertion into protoporphyrin IX. The sequence is that of Ferrochelatase from Pseudomonas fluorescens (strain ATCC BAA-477 / NRRL B-23932 / Pf-5).